A 315-amino-acid chain; its full sequence is MMNPFFQNTSCSPYYRTDQPCSLGNYVSYAIPVAGVADIVAAINFTQTHNVRLVIKNTGHDYMGKSTGRGALSLWTHNLKSRQLVNYSSAHYTGPAIKVGAGVTGGEALVHASASGYRIVSGDCPTVGYSGGYSSGGGHSILNSVHGLAADNVLEWEVVTADGRHVVASPDQNSDLYWAMSGGGGGTFAVALSMTSRVHADSIIGAASLSFNATSAPSNDSFVSALNAWWAFLPSLVDVGATPSWNIFAGNFLVPNTTAPGRTAADMDTLYSPFLSELKRLGIPYAFESFSAPNYLQHYNDTDGPLPDGPLAAWA.

The region spanning 19–201 (QPCSLGNYVS…LSMTSRVHAD (183 aa)) is the FAD-binding PCMH-type domain.

Belongs to the oxygen-dependent FAD-linked oxidoreductase family.

It catalyses the reaction betaenone C = betaenone A. It carries out the reaction stemphyloxin I = stemphyloxin II. The protein operates within mycotoxin biosynthesis. In terms of biological role, FAD-linked oxidoreductase; part of the gene cluster that mediates the biosynthesis of the phytotoxin stemphyloxin II. The first step of the pathway is the synthesis of dehydroprobetaenone I by the polyketide synthase sthA and the enoyl reductase sthE via condensation of one acetyl-CoA starter unit with 7 malonyl-CoA units and 5 methylations. The C-terminal reductase (R) domain of sthA catalyzes the reductive release of the polyketide chain. Because sthA lacks a designated enoylreductase (ER) domain, the required activity is provided the enoyl reductase sthE. The short-chain dehydrogenase/reductase sthC then catalyzes reduction of dehydroprobetaenone I to probetaenone I. The cytochrome P450 monooxygenase sthF catalyzes successive epoxidation, oxidation (resulting from epoxide opening) and hydroxylation to install a tertiary alcohol in the decaline ring to yield betaenone C from dehydroprobetaenone I and betaenone B from probetaenone I. The FAD-linked oxidoreductase sthB is responsible for the conversion of betaenone C to betaenone A via an intramolecular aldol reaction between C-1 and C-17 to form the bridged tricyclic system in betaenone A. Finally, the cytochrome P450 monooxygenase sthD catalyzes the hydroxylation of C-15 to afford the final metabolite stemphyloxin II. The chain is FAD-linked oxidoreductase sthB from Phaeosphaeria nodorum (strain SN15 / ATCC MYA-4574 / FGSC 10173) (Glume blotch fungus).